The primary structure comprises 278 residues: Non-heme chloroperoxidase (278 aa).

An AB hydrolase-1 domain is found at 24–259 (PIVFHHGWPL…LKTYPGYSHG (236 aa)). Catalysis depends on residues serine 97, aspartate 229, and histidine 258.

This sequence belongs to the AB hydrolase superfamily. Bacterial non-heme haloperoxidase / perhydrolase family. As to quaternary structure, homodimer.

Its function is as follows. Chlorinates and brominates suitable organic compounds. Involved in the biosynthesis of the antibiotic pyrrolnitrin. This chain is Non-heme chloroperoxidase (cpo), found in Burkholderia pyrrocinia (Pseudomonas pyrrocinia).